We begin with the raw amino-acid sequence, 102 residues long: Protein V2 (102 aa).

Its function is as follows. May be involved in the regulation of ssDNA versus dsDNA levels. This chain is Protein V2, found in Beet curly top virus (strain California/Logan) (BCTV).